A 99-amino-acid chain; its full sequence is DNA-binding protein HU (99 aa).

Residues 63–82 are disordered; it reads HRKEREGRNPKTGAKMKIDA.

Belongs to the bacterial histone-like protein family. As to quaternary structure, homodimer.

Functionally, histone-like DNA-binding protein which is capable of wrapping DNA to stabilize it, and thus to prevent its denaturation under extreme environmental conditions. In Rickettsia prowazekii (strain Madrid E), this protein is DNA-binding protein HU (hup).